Reading from the N-terminus, the 595-residue chain is Aspartate--tRNA(Asp/Asn) ligase (595 aa).

Position 175 (E175) interacts with L-aspartate. Positions 199–202 (QQYK) are aspartate. L-aspartate contacts are provided by R221 and H454. 221–223 (RDE) contributes to the ATP binding site. Residue E488 coordinates ATP. R495 is an L-aspartate binding site. Residue 540 to 543 (GIDR) coordinates ATP.

The protein belongs to the class-II aminoacyl-tRNA synthetase family. Type 1 subfamily. In terms of assembly, homodimer.

It is found in the cytoplasm. It carries out the reaction tRNA(Asx) + L-aspartate + ATP = L-aspartyl-tRNA(Asx) + AMP + diphosphate. In terms of biological role, aspartyl-tRNA synthetase with relaxed tRNA specificity since it is able to aspartylate not only its cognate tRNA(Asp) but also tRNA(Asn). Reaction proceeds in two steps: L-aspartate is first activated by ATP to form Asp-AMP and then transferred to the acceptor end of tRNA(Asp/Asn). The polypeptide is Aspartate--tRNA(Asp/Asn) ligase (Sinorhizobium medicae (strain WSM419) (Ensifer medicae)).